The chain runs to 325 residues: Elongation factor P--(R)-beta-lysine ligase (325 aa).

76–78 contacts substrate; the sequence is SPE. Residues 100-102 and N109 contribute to the ATP site; that span reads RNE. Y118 is a binding site for substrate. 244–245 is an ATP binding site; sequence EL. E251 lines the substrate pocket. G300 contributes to the ATP binding site.

This sequence belongs to the class-II aminoacyl-tRNA synthetase family. EpmA subfamily. Homodimer.

It carries out the reaction D-beta-lysine + L-lysyl-[protein] + ATP = N(6)-((3R)-3,6-diaminohexanoyl)-L-lysyl-[protein] + AMP + diphosphate + H(+). In terms of biological role, with EpmB is involved in the beta-lysylation step of the post-translational modification of translation elongation factor P (EF-P) on 'Lys-34'. Catalyzes the ATP-dependent activation of (R)-beta-lysine produced by EpmB, forming a lysyl-adenylate, from which the beta-lysyl moiety is then transferred to the epsilon-amino group of EF-P 'Lys-34'. This chain is Elongation factor P--(R)-beta-lysine ligase, found in Salmonella paratyphi A (strain ATCC 9150 / SARB42).